The following is a 274-amino-acid chain: Kit ligand (274 aa).

Residues Met1–Thr25 form the signal peptide. Over Lys26 to Gln215 the chain is Extracellular. 2 disulfide bridges follow: Cys29–Cys114 and Cys68–Cys164. N-linked (GlcNAc...) asparagine glycosylation is found at Asn90, Asn97, Asn145, Asn196, and Asn207. A helical transmembrane segment spans residues Trp216 to Trp238. The Cytoplasmic segment spans residues Lys239–Val274.

It belongs to the SCF family. In terms of assembly, homodimer, non-covalently linked. Post-translationally, a soluble form is produced by proteolytic processing of the extracellular domain.

It localises to the cytoplasm. Its subcellular location is the cytoskeleton. The protein localises to the cell membrane. It is found in the cell projection. The protein resides in the lamellipodium. It localises to the filopodium. Its subcellular location is the secreted. Functionally, stimulates the proliferation of mast cells. Able to augment the proliferation of both myeloid and lymphoid hematopoietic progenitors in bone marrow culture. Also mediates cell-cell adhesion. Acts synergistically with other cytokines, probably interleukins. The sequence is that of Kit ligand (KITLG) from Equus caballus (Horse).